The chain runs to 342 residues: Delta(6)-protoilludene synthase 8 (342 aa).

Residue Asp-81 coordinates Mg(2+). The DDXXD motif motif lies at 93–97; it reads RDMVD. Mg(2+)-binding residues include Asn-217, Ser-221, and Glu-225. Positions 217–225 match the NSE/DTE motif motif; that stretch reads NDLVSYNRE. (2E,6E)-farnesyl diphosphate is bound by residues Arg-305 and Tyr-306.

It belongs to the terpene synthase family. Mg(2+) is required as a cofactor.

The enzyme catalyses (2E,6E)-farnesyl diphosphate = Delta(6)-protoilludene + diphosphate. In terms of biological role, terpene cyclase that catalyzes the cyclization of farnesyl diphosphate (FPP) to delta(6)-protoilludene. This chain is Delta(6)-protoilludene synthase 8, found in Postia placenta (strain ATCC 44394 / Madison 698-R) (Brown rot fungus).